We begin with the raw amino-acid sequence, 138 residues long: 10 kDa chaperonin 1, chloroplastic (138 aa).

Residues M1–R61 constitute a chloroplast transit peptide. A cpn-10 domain region spans residues K50 to V137.

The protein belongs to the GroES chaperonin family. In terms of tissue distribution, expressed at low levels in germinating seeds, seedlings, rosettes leaves, flowers and siliques.

The protein resides in the plastid. The protein localises to the chloroplast. Functionally, functions as a co-chaperone for protein folding in chloroplasts. This Arabidopsis thaliana (Mouse-ear cress) protein is 10 kDa chaperonin 1, chloroplastic.